The following is a 129-amino-acid chain: Small ribosomal subunit protein eS8 (129 aa).

Positions 1–29 (MSVWQGRSRRKPTGGLYRPARKKRKYEMG) are disordered.

This sequence belongs to the eukaryotic ribosomal protein eS8 family. Part of the 30S ribosomal subunit.

This chain is Small ribosomal subunit protein eS8 (rps8e), found in Methanocaldococcus jannaschii (strain ATCC 43067 / DSM 2661 / JAL-1 / JCM 10045 / NBRC 100440) (Methanococcus jannaschii).